The primary structure comprises 514 residues: ATP synthase subunit alpha (514 aa).

Gly170–Thr177 contributes to the ATP binding site.

Belongs to the ATPase alpha/beta chains family. As to quaternary structure, F-type ATPases have 2 components, CF(1) - the catalytic core - and CF(0) - the membrane proton channel. CF(1) has five subunits: alpha(3), beta(3), gamma(1), delta(1), epsilon(1). CF(0) has three main subunits: a(1), b(2) and c(9-12). The alpha and beta chains form an alternating ring which encloses part of the gamma chain. CF(1) is attached to CF(0) by a central stalk formed by the gamma and epsilon chains, while a peripheral stalk is formed by the delta and b chains.

It is found in the cell inner membrane. It catalyses the reaction ATP + H2O + 4 H(+)(in) = ADP + phosphate + 5 H(+)(out). Functionally, produces ATP from ADP in the presence of a proton gradient across the membrane. The alpha chain is a regulatory subunit. This chain is ATP synthase subunit alpha, found in Marinobacter nauticus (strain ATCC 700491 / DSM 11845 / VT8) (Marinobacter aquaeolei).